We begin with the raw amino-acid sequence, 158 residues long: Small ribosomal subunit protein uS15 (158 aa).

Basic residues predominate over residues 1–18 (MARMHARKRGKSGSKRPP). Residues 1 to 21 (MARMHARKRGKSGSKRPPRTA) are disordered.

Belongs to the universal ribosomal protein uS15 family. Part of the 30S ribosomal subunit.

In Pyrococcus abyssi (strain GE5 / Orsay), this protein is Small ribosomal subunit protein uS15.